The sequence spans 57 residues: Large ribosomal subunit protein uL30 (57 aa).

Belongs to the universal ribosomal protein uL30 family. Part of the 50S ribosomal subunit.

The protein is Large ribosomal subunit protein uL30 of Acholeplasma laidlawii (strain PG-8A).